Here is a 111-residue protein sequence, read N- to C-terminus: Ribonuclease P protein component 1 (111 aa).

The protein belongs to the eukaryotic/archaeal RNase P protein component 1 family. As to quaternary structure, consists of a catalytic RNA component and at least 4-5 protein subunits.

The protein resides in the cytoplasm. It catalyses the reaction Endonucleolytic cleavage of RNA, removing 5'-extranucleotides from tRNA precursor.. Part of ribonuclease P, a protein complex that generates mature tRNA molecules by cleaving their 5'-ends. The chain is Ribonuclease P protein component 1 from Hyperthermus butylicus (strain DSM 5456 / JCM 9403 / PLM1-5).